Consider the following 116-residue polypeptide: Large ribosomal subunit protein uL18 (116 aa).

This sequence belongs to the universal ribosomal protein uL18 family. Part of the 50S ribosomal subunit; part of the 5S rRNA/L5/L18/L25 subcomplex. Contacts the 5S and 23S rRNAs.

This is one of the proteins that bind and probably mediate the attachment of the 5S RNA into the large ribosomal subunit, where it forms part of the central protuberance. This Pseudomonas syringae pv. tomato (strain ATCC BAA-871 / DC3000) protein is Large ribosomal subunit protein uL18.